Here is a 210-residue protein sequence, read N- to C-terminus: MRAFKWALAIGATLALPLTAQAQTGGAERLAALLESVTSYSADFDQQILDGGGQRLQEAEGHMWLSRPGKFHWEVEAPYRQVVVSDGDKVYLYDPDLEQVSVRPLDTRVTHTPALLLSGSADALTENYAVESRQGDDEETFTLTPKSPDTLFESLQLTFENERLEGLQMEDSTGQRTAIAFDDIEVNGDIDASRFTFEIPEGADVIREGG.

The N-terminal stretch at 1–22 is a signal peptide; it reads MRAFKWALAIGATLALPLTAQA.

The protein belongs to the LolA family. Monomer.

The protein resides in the periplasm. Functionally, participates in the translocation of lipoproteins from the inner membrane to the outer membrane. Only forms a complex with a lipoprotein if the residue after the N-terminal Cys is not an aspartate (The Asp acts as a targeting signal to indicate that the lipoprotein should stay in the inner membrane). In Chromohalobacter salexigens (strain ATCC BAA-138 / DSM 3043 / CIP 106854 / NCIMB 13768 / 1H11), this protein is Outer-membrane lipoprotein carrier protein.